The chain runs to 556 residues: Arginine--tRNA ligase (556 aa).

The 'HIGH' region motif lies at 117-127 (PNVAKQMHVGH).

This sequence belongs to the class-I aminoacyl-tRNA synthetase family. Monomer.

The protein localises to the cytoplasm. It catalyses the reaction tRNA(Arg) + L-arginine + ATP = L-arginyl-tRNA(Arg) + AMP + diphosphate. This is Arginine--tRNA ligase from Cutibacterium acnes (strain DSM 16379 / KPA171202) (Propionibacterium acnes).